The following is a 553-amino-acid chain: Efflux pump mlcE (553 aa).

The span at 1 to 19 (MSEPLPPKEGEPRPQKEES) shows a compositional bias: basic and acidic residues. Residues 1 to 29 (MSEPLPPKEGEPRPQKEESQNDTLEATES) form a disordered region. N-linked (GlcNAc...) asparagine glycosylation is present at Asn21. 13 helical membrane-spanning segments follow: residues 41 to 61 (LVVASVTFVAFLMLLDMSIIV), 77 to 96 (VGWYGSAYLLANCALQPLAG), 101 to 121 (LLGLKYTFFAFLCIFELGSVL), 136 to 156 (AVAGMGGSGLVNGALTILSTA), 164 to 184 (VLIGVMMGLSQIAIVCGPLLG), 196 to 216 (CFYINLPIGAVAAFLLLVITI), 245 to 265 (LVGFVVFAAFATMISLALEWG), 273 to 293 (SSVIIGLFCGGGFALIAFVLW), 319 to 339 (LFMGFFSGSLLVFSYYLPIYF), 352 to 372 (VYMLPGILGQVIMAMVSGFAI), 376 to 396 (GYYLPWALGSAVLVAIGAGLV), 440 to 460 (ALGISLAVFGQTFGGSLFLDF), and 516 to 536 (TFYLAVGATACTFVFAFGMGW). Asn543 carries N-linked (GlcNAc...) asparagine glycosylation.

It belongs to the major facilitator superfamily. TCR/Tet family.

The protein resides in the membrane. Efflux pump; part of the gene cluster that mediates the biosynthesis of compactin, also known as mevastatin or ML-236B, and which acts as a potent competitive inhibitor of HMG-CoA reductase. In Penicillium citrinum, this protein is Efflux pump mlcE.